A 304-amino-acid chain; its full sequence is N-acetylmuramic acid 6-phosphate etherase (304 aa).

In terms of domain architecture, SIS spans 60 to 221 (GVSVLRHGGR…STAVMVRLGY (162 aa)). The Proton donor role is filled by Glu-88. Glu-119 is an active-site residue.

Belongs to the GCKR-like family. MurNAc-6-P etherase subfamily. Homodimer.

The enzyme catalyses N-acetyl-D-muramate 6-phosphate + H2O = N-acetyl-D-glucosamine 6-phosphate + (R)-lactate. It functions in the pathway amino-sugar metabolism; N-acetylmuramate degradation. In terms of biological role, specifically catalyzes the cleavage of the D-lactyl ether substituent of MurNAc 6-phosphate, producing GlcNAc 6-phosphate and D-lactate. The chain is N-acetylmuramic acid 6-phosphate etherase from Thermobifida fusca (strain YX).